We begin with the raw amino-acid sequence, 400 residues long: Methylamine dehydrogenase heavy chain (400 aa).

An N-terminal signal peptide occupies residues 1 to 27; sequence MTTFQPGRLAGQLAATALLAATCSAFA.

Belongs to the aromatic amine dehydrogenase heavy chain family. As to quaternary structure, tetramer of two light and two heavy chains.

It is found in the periplasm. The catalysed reaction is 2 oxidized [amicyanin] + methylamine + H2O = 2 reduced [amicyanin] + formaldehyde + NH4(+) + 2 H(+). In terms of biological role, methylamine dehydrogenase carries out the oxidation of methylamine. Electrons are passed from methylamine dehydrogenase to amicyanin. This chain is Methylamine dehydrogenase heavy chain (mauB), found in Methylobacillus flagellatus (strain ATCC 51484 / DSM 6875 / VKM B-1610 / KT).